A 253-amino-acid polypeptide reads, in one-letter code: Sulfate transporter CysZ (253 aa).

Helical transmembrane passes span 31–51 (FVIL…WWLF), 75–95 (LLWP…FSTI), 151–171 (IVLL…PVLW), and 222–242 (IPLL…AMWV).

The protein belongs to the CysZ family.

It is found in the cell inner membrane. Its function is as follows. High affinity, high specificity proton-dependent sulfate transporter, which mediates sulfate uptake. Provides the sulfur source for the cysteine synthesis pathway. In Escherichia coli O7:K1 (strain IAI39 / ExPEC), this protein is Sulfate transporter CysZ.